Reading from the N-terminus, the 72-residue chain is Putative beta-neurotoxin (72 aa).

An N-terminal signal peptide occupies residues 1 to 7; sequence IDMVVEC. An LCN-type CS-alpha/beta domain is found at 9–71; sequence KDGYLMEHDG…TWSRATNRCG (63 aa). 4 disulfide bridges follow: cysteine 19–cysteine 70, cysteine 23–cysteine 45, cysteine 31–cysteine 51, and cysteine 35–cysteine 53.

As to expression, expressed by the venom gland.

It is found in the secreted. Functionally, beta toxins bind voltage-independently at site-4 of sodium channels (Nav) and shift the voltage of activation toward more negative potentials thereby affecting sodium channel activation and promoting spontaneous and repetitive firing. This is Putative beta-neurotoxin from Tityus pachyurus (Colombian scorpion).